The chain runs to 334 residues: Holliday junction branch migration complex subunit RuvB (334 aa).

A large ATPase domain (RuvB-L) region spans residues 4–184; that stretch reads ADRLIQPQIQ…FGIPLRLEFY (181 aa). Residues Arg24, Gly65, Lys68, Thr69, Thr70, 131–133, Arg174, Tyr184, and Arg221 contribute to the ATP site; that span reads EDY. Residue Thr69 coordinates Mg(2+). A small ATPAse domain (RuvB-S) region spans residues 185 to 255; that stretch reads NIKDLSTIVT…VAEHALDLLD (71 aa). The tract at residues 258-334 is head domain (RuvB-H); that stretch reads SEGFDYMDRK…YQHFELIKPE (77 aa). The DNA site is built by Arg294, Arg313, and Arg318.

Belongs to the RuvB family. As to quaternary structure, homohexamer. Forms an RuvA(8)-RuvB(12)-Holliday junction (HJ) complex. HJ DNA is sandwiched between 2 RuvA tetramers; dsDNA enters through RuvA and exits via RuvB. An RuvB hexamer assembles on each DNA strand where it exits the tetramer. Each RuvB hexamer is contacted by two RuvA subunits (via domain III) on 2 adjacent RuvB subunits; this complex drives branch migration. In the full resolvosome a probable DNA-RuvA(4)-RuvB(12)-RuvC(2) complex forms which resolves the HJ.

It is found in the cytoplasm. It carries out the reaction ATP + H2O = ADP + phosphate + H(+). Functionally, the RuvA-RuvB-RuvC complex processes Holliday junction (HJ) DNA during genetic recombination and DNA repair, while the RuvA-RuvB complex plays an important role in the rescue of blocked DNA replication forks via replication fork reversal (RFR). RuvA specifically binds to HJ cruciform DNA, conferring on it an open structure. The RuvB hexamer acts as an ATP-dependent pump, pulling dsDNA into and through the RuvAB complex. RuvB forms 2 homohexamers on either side of HJ DNA bound by 1 or 2 RuvA tetramers; 4 subunits per hexamer contact DNA at a time. Coordinated motions by a converter formed by DNA-disengaged RuvB subunits stimulates ATP hydrolysis and nucleotide exchange. Immobilization of the converter enables RuvB to convert the ATP-contained energy into a lever motion, pulling 2 nucleotides of DNA out of the RuvA tetramer per ATP hydrolyzed, thus driving DNA branch migration. The RuvB motors rotate together with the DNA substrate, which together with the progressing nucleotide cycle form the mechanistic basis for DNA recombination by continuous HJ branch migration. Branch migration allows RuvC to scan DNA until it finds its consensus sequence, where it cleaves and resolves cruciform DNA. The polypeptide is Holliday junction branch migration complex subunit RuvB (Shewanella baltica (strain OS195)).